The sequence spans 729 residues: Fatty acid oxidation complex subunit alpha (729 aa).

The tract at residues 1 to 189 is enoyl-CoA hydratase/isomerase; it reads MLYKGDTLYL…KIGLVDGVVK (189 aa). D296 serves as a coordination point for substrate. The tract at residues 311–729 is 3-hydroxyacyl-CoA dehydrogenase; the sequence is ETPKQAAVLG…ARPVGSLKTA (419 aa). NAD(+) contacts are provided by residues M324, D343, 400–402, K407, and S429; that span reads VVE. The active-site For 3-hydroxyacyl-CoA dehydrogenase activity is the H450. N453 contributes to the NAD(+) binding site. Substrate is bound by residues N500 and Y660. A disordered region spans residues 708 to 729; the sequence is RHNEPYYPPVEPARPVGSLKTA.

The protein in the N-terminal section; belongs to the enoyl-CoA hydratase/isomerase family. It in the C-terminal section; belongs to the 3-hydroxyacyl-CoA dehydrogenase family. As to quaternary structure, heterotetramer of two alpha chains (FadB) and two beta chains (FadA).

The catalysed reaction is a (3S)-3-hydroxyacyl-CoA + NAD(+) = a 3-oxoacyl-CoA + NADH + H(+). The enzyme catalyses a (3S)-3-hydroxyacyl-CoA = a (2E)-enoyl-CoA + H2O. It carries out the reaction a 4-saturated-(3S)-3-hydroxyacyl-CoA = a (3E)-enoyl-CoA + H2O. It catalyses the reaction (3S)-3-hydroxybutanoyl-CoA = (3R)-3-hydroxybutanoyl-CoA. The catalysed reaction is a (3Z)-enoyl-CoA = a 4-saturated (2E)-enoyl-CoA. The enzyme catalyses a (3E)-enoyl-CoA = a 4-saturated (2E)-enoyl-CoA. The protein operates within lipid metabolism; fatty acid beta-oxidation. Involved in the aerobic and anaerobic degradation of long-chain fatty acids via beta-oxidation cycle. Catalyzes the formation of 3-oxoacyl-CoA from enoyl-CoA via L-3-hydroxyacyl-CoA. It can also use D-3-hydroxyacyl-CoA and cis-3-enoyl-CoA as substrate. In Salmonella agona (strain SL483), this protein is Fatty acid oxidation complex subunit alpha.